The primary structure comprises 665 residues: Ion-translocating oxidoreductase complex subunit C (665 aa).

2 4Fe-4S ferredoxin-type domains span residues 368–398 and 408–437; these read EYAEPEAEQACIRCSSCSDACPVNLMPQQLY and KSEEYALKDCIECGICAYVCPSHIPLIQYF. The [4Fe-4S] cluster site is built by C378, C381, C384, C388, C417, C420, C423, and C427. Basic and acidic residues-rich tracts occupy residues 465–477 and 485–513; these read QARMEREEQERKA and ARREELAQTKGEDPVKAALERLKAKKANE. 3 disordered regions span residues 465–568, 580–623, and 637–665; these read QARM…DAKK, AKKL…LDPK, and KKLAQANSTSEAISNSQTAENEVEKQIVR. Composition is skewed to polar residues over residues 554–564 and 585–600; these read VENQEQQTQPT and QTNSTSEAISNSQTAE. Basic and acidic residues predominate over residues 602–615; that stretch reads EVEKTKSAVEKTEE. Positions 643–656 are enriched in polar residues; it reads NSTSEAISNSQTAE.

Belongs to the 4Fe4S bacterial-type ferredoxin family. RnfC subfamily. The complex is composed of six subunits: RnfA, RnfB, RnfC, RnfD, RnfE and RnfG. [4Fe-4S] cluster serves as cofactor.

It is found in the cell inner membrane. In terms of biological role, part of a membrane-bound complex that couples electron transfer with translocation of ions across the membrane. The chain is Ion-translocating oxidoreductase complex subunit C from Haemophilus influenzae (strain 86-028NP).